A 201-amino-acid polypeptide reads, in one-letter code: MFPEQQKEEFVSVWVRDPRIQKEDFWHSYIDYEICIHTNSMCFTMKTSCVRRRYREFVWLRQRLQSNALLVQLPELPSKNLFFNMNNRQHVDQRRQGLEDFLRKVLQNALLLSDSSLHLFLQSHLNSEDIEACVSGQTKYSVEEAIHKFALMNRRFPEEDEEGKKENDIDYDSESSSSGLGHSSDDSSSHGCKVNTAPQES.

Positions Glu8–Leu125 are required for interaction with ATP6V1D. Positions Phe10–Ser127 constitute a PX domain. A 1,2-diacyl-sn-glycero-3-phospho-(1D-myo-inositol-3-phosphate) is bound by residues Arg53, Lys79, and Arg94. The disordered stretch occupies residues Phe156–Ser201.

The protein belongs to the sorting nexin family. As to quaternary structure, interacts with ATP6V1D; may play a role in ciliogenesis.

It is found in the cytoplasm. It localises to the endosome membrane. The protein localises to the cytoskeleton. Its subcellular location is the microtubule organizing center. The protein resides in the centrosome. In terms of biological role, probable phosphoinositide-binding protein involved in protein sorting and membrane trafficking in endosomes. Plays a role in cilium biogenesis through regulation of the transport and the localization of proteins to the cilium. Required for the localization to the cilium of V-ATPase subunit ATP6V1D and ATP6V0D1, and RAB8A. Involved in osteoclast differentiation and therefore bone resorption. The sequence is that of Sorting nexin-10 (SNX10) from Homo sapiens (Human).